Consider the following 421-residue polypeptide: MELEAKVKKMGLGHEQGFGAPCLKCKEKCEGFELHFWRKICRNCKCGQEEHDVLLSNEEDRKVGKLFEDTKYTTLIAKLKSDGIPMYKRNVMILTNPVAAKKNVSINTVTYEWAPPVQNQALARQYMQMLPKEKQPVAGSEGAQYRKKQLAKQLPAHDQDPSKCHELSPKEVKEMEQFVKKYKSEALGVGDVKLPREMDAQSTNRMYIPGGDRSTAAAVGAMEDKSAEHKRTQYSCYCCKQSMKEGDPAIYAERAGYDKLWHPACFVCSTCHELLVDMIYFWKNGKLYCGRHYCDSEKPRCAGCDELIFSNEYTQAENQNWHLKHFCCFDCDNILAGEIYVMVNDKPVCKPCYVKNHAVVCQGCHNAIDPEVQRVTYNNFSWHASTECFLCSCCSKCLIGQKFMPVEGMVFCSVECKKMMS.

In terms of domain architecture, PET spans 92–199; it reads MILTNPVAAK…GDVKLPREMD (108 aa). The interval 133–164 is disordered; it reads EKQPVAGSEGAQYRKKQLAKQLPAHDQDPSKC. Positions 155–164 are enriched in basic and acidic residues; the sequence is PAHDQDPSKC. LIM zinc-binding domains follow at residues 234–297, 299–359, and 362–421; these read YSCY…CDSE, PRCA…NHAV, and QGCH…KMMS.

Belongs to the prickle / espinas / testin family. In terms of assembly, interacts via LIM domain 1 with ZYX. Interacts (via LIM domain 3) with ENAH and VASP. Interacts with ALKBH4, talin, actin, alpha-actinin, GRIP1 and PXN. Interacts (via LIM domain 2) with ACTL7A (via N-terminus). Heterodimer with ACTL7A; the heterodimer interacts with ENAH to form a heterotrimer.

The protein localises to the cytoplasm. Its subcellular location is the cell junction. The protein resides in the focal adhesion. Functionally, scaffold protein that may play a role in cell adhesion, cell spreading and in the reorganization of the actin cytoskeleton. Plays a role in the regulation of cell proliferation. May act as a tumor suppressor. This Canis lupus familiaris (Dog) protein is Testin (TES).